The sequence spans 430 residues: ATP-dependent protease ATPase subunit HslU (430 aa).

ATP is bound by residues valine 18, 60–65 (GVGKTE), aspartate 243, glutamate 308, and arginine 380.

The protein belongs to the ClpX chaperone family. HslU subfamily. As to quaternary structure, a double ring-shaped homohexamer of HslV is capped on each side by a ring-shaped HslU homohexamer. The assembly of the HslU/HslV complex is dependent on binding of ATP.

Its subcellular location is the cytoplasm. In terms of biological role, ATPase subunit of a proteasome-like degradation complex; this subunit has chaperone activity. The binding of ATP and its subsequent hydrolysis by HslU are essential for unfolding of protein substrates subsequently hydrolyzed by HslV. HslU recognizes the N-terminal part of its protein substrates and unfolds these before they are guided to HslV for hydrolysis. This Caulobacter vibrioides (strain ATCC 19089 / CIP 103742 / CB 15) (Caulobacter crescentus) protein is ATP-dependent protease ATPase subunit HslU.